Consider the following 383-residue polypeptide: 8-amino-7-oxononanoate synthase (383 aa).

Residue arginine 21 participates in substrate binding. 108-109 is a binding site for pyridoxal 5'-phosphate; sequence GY. Histidine 133 is a binding site for substrate. Pyridoxal 5'-phosphate-binding residues include serine 179, histidine 207, and threonine 233. Position 236 is an N6-(pyridoxal phosphate)lysine (lysine 236). Threonine 350 lines the substrate pocket.

It belongs to the class-II pyridoxal-phosphate-dependent aminotransferase family. BioF subfamily. In terms of assembly, homodimer. Requires pyridoxal 5'-phosphate as cofactor.

It carries out the reaction 6-carboxyhexanoyl-[ACP] + L-alanine + H(+) = (8S)-8-amino-7-oxononanoate + holo-[ACP] + CO2. Its pathway is cofactor biosynthesis; biotin biosynthesis. In terms of biological role, catalyzes the decarboxylative condensation of pimeloyl-[acyl-carrier protein] and L-alanine to produce 8-amino-7-oxononanoate (AON), [acyl-carrier protein], and carbon dioxide. This Yersinia pseudotuberculosis serotype O:1b (strain IP 31758) protein is 8-amino-7-oxononanoate synthase.